The following is a 67-amino-acid chain: Large ribosomal subunit protein bL35 (67 aa).

This sequence belongs to the bacterial ribosomal protein bL35 family.

In Anaeromyxobacter sp. (strain Fw109-5), this protein is Large ribosomal subunit protein bL35.